We begin with the raw amino-acid sequence, 95 residues long: NADH-quinone oxidoreductase subunit K (95 aa).

3 consecutive transmembrane segments (helical) span residues 1 to 21, 25 to 45, and 59 to 79; these read MSYLLASALLFALGVYGVLTR, ILVFLSIELMLNAANLSLVGF, and MVIAVAAAEVAVGLGLIVAIF.

Belongs to the complex I subunit 4L family. NDH-1 is composed of 15 different subunits. Subunits NuoA, H, J, K, L, M, N constitute the membrane sector of the complex.

The protein localises to the cell inner membrane. It carries out the reaction a quinone + NADH + 5 H(+)(in) = a quinol + NAD(+) + 4 H(+)(out). NDH-1 shuttles electrons from NADH, via FMN and iron-sulfur (Fe-S) centers, to quinones in the respiratory chain. The immediate electron acceptor for the enzyme in this species is believed to be a menaquinone. Couples the redox reaction to proton translocation (for every two electrons transferred, four hydrogen ions are translocated across the cytoplasmic membrane), and thus conserves the redox energy in a proton gradient. This is NADH-quinone oxidoreductase subunit K from Thermus thermophilus (strain ATCC BAA-163 / DSM 7039 / HB27).